Here is a 202-residue protein sequence, read N- to C-terminus: Nascent polypeptide-associated complex subunit alpha (202 aa).

The segment covering 1–19 has biased composition (basic and acidic residues); that stretch reads MADPRVEELPDEEVPKTNV. The tract at residues 1–44 is disordered; it reads MADPRVEELPDEEVPKTNVEDAGSDSESEAGEEPTIPGGAAVAV. Acidic residues predominate over residues 22–32; it reads AGSDSESEAGE. Residues 46 to 111 enclose the NAC-A/B domain; sequence SRNEKKARKA…AKIEDLNAQA (66 aa). Positions 118 to 165 are disordered; it reads QLAAQEAAQEHAGHEHEDILGKAKEPEAEKKEAEEDDGEEVDESGLEA. A compositionally biased stretch (basic and acidic residues) spans 125-150; sequence AQEHAGHEHEDILGKAKEPEAEKKEA. The span at 151–162 shows a compositional bias: acidic residues; sequence EEDDGEEVDESG. The 40-residue stretch at 163–202 folds into the UBA domain; it reads LEAKDIELVMAQANVSRKKAVKALRENDNDIVNSIMALSI.

This sequence belongs to the NAC-alpha family. In terms of assembly, part of the nascent polypeptide-associated complex (NAC), consisting of egd2 and egd1. NAC associates with ribosomes via egd1.

The protein resides in the cytoplasm. The protein localises to the nucleus. Functionally, component of the nascent polypeptide-associated complex (NAC), a dynamic component of the ribosomal exit tunnel, protecting the emerging polypeptides from interaction with other cytoplasmic proteins to ensure appropriate nascent protein targeting. The NAC complex also promotes mitochondrial protein import by enhancing productive ribosome interactions with the outer mitochondrial membrane and blocks the inappropriate interaction of ribosomes translating non-secretory nascent polypeptides with translocation sites in the membrane of the endoplasmic reticulum. Egd2 may also be involved in transcription regulation. The protein is Nascent polypeptide-associated complex subunit alpha (egd2) of Aspergillus terreus (strain NIH 2624 / FGSC A1156).